A 216-amino-acid chain; its full sequence is Uracil-DNA glycosylase (216 aa).

Catalysis depends on aspartate 59, which acts as the Proton acceptor.

It belongs to the uracil-DNA glycosylase (UDG) superfamily. UNG family.

The protein localises to the cytoplasm. It carries out the reaction Hydrolyzes single-stranded DNA or mismatched double-stranded DNA and polynucleotides, releasing free uracil.. In terms of biological role, excises uracil residues from the DNA which can arise as a result of misincorporation of dUMP residues by DNA polymerase or due to deamination of cytosine. The protein is Uracil-DNA glycosylase of Idiomarina loihiensis (strain ATCC BAA-735 / DSM 15497 / L2-TR).